A 454-amino-acid polypeptide reads, in one-letter code: Bifunctional protein GlmU (454 aa).

The tract at residues 1-228 (MNKCAIILAA…FEETLGVNSR (228 aa)) is pyrophosphorylase. Residues 8–11 (LAAG), lysine 22, glutamine 73, and 78–79 (GT) contribute to the UDP-N-acetyl-alpha-D-glucosamine site. Aspartate 103 serves as a coordination point for Mg(2+). UDP-N-acetyl-alpha-D-glucosamine is bound by residues glycine 140, glutamate 154, asparagine 169, and asparagine 226. Mg(2+) is bound at residue asparagine 226. A linker region spans residues 229-249 (AELAKVESIMRNRINRTHLDN). Residues 250–454 (GVTIIDPLNT…EGWVERKKLK (205 aa)) are N-acetyltransferase. 2 residues coordinate UDP-N-acetyl-alpha-D-glucosamine: arginine 331 and lysine 349. Histidine 361 serves as the catalytic Proton acceptor. Tyrosine 364 and asparagine 375 together coordinate UDP-N-acetyl-alpha-D-glucosamine. Acetyl-CoA-binding positions include 384–385 (NY), alanine 421, and arginine 438.

In the N-terminal section; belongs to the N-acetylglucosamine-1-phosphate uridyltransferase family. This sequence in the C-terminal section; belongs to the transferase hexapeptide repeat family. Homotrimer. Mg(2+) serves as cofactor.

It is found in the cytoplasm. The catalysed reaction is alpha-D-glucosamine 1-phosphate + acetyl-CoA = N-acetyl-alpha-D-glucosamine 1-phosphate + CoA + H(+). The enzyme catalyses N-acetyl-alpha-D-glucosamine 1-phosphate + UTP + H(+) = UDP-N-acetyl-alpha-D-glucosamine + diphosphate. It participates in nucleotide-sugar biosynthesis; UDP-N-acetyl-alpha-D-glucosamine biosynthesis; N-acetyl-alpha-D-glucosamine 1-phosphate from alpha-D-glucosamine 6-phosphate (route II): step 2/2. It functions in the pathway nucleotide-sugar biosynthesis; UDP-N-acetyl-alpha-D-glucosamine biosynthesis; UDP-N-acetyl-alpha-D-glucosamine from N-acetyl-alpha-D-glucosamine 1-phosphate: step 1/1. The protein operates within bacterial outer membrane biogenesis; LPS lipid A biosynthesis. In terms of biological role, catalyzes the last two sequential reactions in the de novo biosynthetic pathway for UDP-N-acetylglucosamine (UDP-GlcNAc). The C-terminal domain catalyzes the transfer of acetyl group from acetyl coenzyme A to glucosamine-1-phosphate (GlcN-1-P) to produce N-acetylglucosamine-1-phosphate (GlcNAc-1-P), which is converted into UDP-GlcNAc by the transfer of uridine 5-monophosphate (from uridine 5-triphosphate), a reaction catalyzed by the N-terminal domain. The polypeptide is Bifunctional protein GlmU (Clostridium perfringens (strain ATCC 13124 / DSM 756 / JCM 1290 / NCIMB 6125 / NCTC 8237 / Type A)).